The primary structure comprises 357 residues: NADH-quinone oxidoreductase subunit H (357 aa).

Transmembrane regions (helical) follow at residues 26–46 (LVKI…LTLW), 92–112 (ALFV…WAVI), 127–147 (LLFV…AGWA), 164–184 (MISY…VTGS), 203–223 (GLTF…IYII), 259–279 (FFLA…LMFL), 294–314 (VPGW…FIWF), and 329–349 (LGWK…AIWM).

Belongs to the complex I subunit 1 family. As to quaternary structure, NDH-1 is composed of 14 different subunits. Subunits NuoA, H, J, K, L, M, N constitute the membrane sector of the complex.

The protein resides in the cell inner membrane. It catalyses the reaction a quinone + NADH + 5 H(+)(in) = a quinol + NAD(+) + 4 H(+)(out). Functionally, NDH-1 shuttles electrons from NADH, via FMN and iron-sulfur (Fe-S) centers, to quinones in the respiratory chain. The immediate electron acceptor for the enzyme in this species is believed to be ubiquinone. Couples the redox reaction to proton translocation (for every two electrons transferred, four hydrogen ions are translocated across the cytoplasmic membrane), and thus conserves the redox energy in a proton gradient. This subunit may bind ubiquinone. The sequence is that of NADH-quinone oxidoreductase subunit H from Janthinobacterium sp. (strain Marseille) (Minibacterium massiliensis).